A 445-amino-acid chain; its full sequence is Tubulin beta-3 chain (445 aa).

The GTP site is built by Gln11, Glu69, Ser138, Gly142, Thr143, Gly144, Asn204, and Asn226. Glu69 is a Mg(2+) binding site. The interval 425 to 445 is disordered; that stretch reads YQDATAEEYDEEEQDGEEEHD. The span at 429 to 445 shows a compositional bias: acidic residues; sequence TAEEYDEEEQDGEEEHD.

It belongs to the tubulin family. As to quaternary structure, dimer of alpha and beta chains. A typical microtubule is a hollow water-filled tube with an outer diameter of 25 nm and an inner diameter of 15 nM. Alpha-beta heterodimers associate head-to-tail to form protofilaments running lengthwise along the microtubule wall with the beta-tubulin subunit facing the microtubule plus end conferring a structural polarity. Microtubules usually have 13 protofilaments but different protofilament numbers can be found in some organisms and specialized cells. The cofactor is Mg(2+).

It localises to the cytoplasm. Its subcellular location is the cytoskeleton. Its function is as follows. Tubulin is the major constituent of microtubules, a cylinder consisting of laterally associated linear protofilaments composed of alpha- and beta-tubulin heterodimers. Microtubules grow by the addition of GTP-tubulin dimers to the microtubule end, where a stabilizing cap forms. Below the cap, tubulin dimers are in GDP-bound state, owing to GTPase activity of alpha-tubulin. This chain is Tubulin beta-3 chain (TUBB3), found in Zea mays (Maize).